A 296-amino-acid polypeptide reads, in one-letter code: Diaminopimelate epimerase (296 aa).

Positions 17, 49, and 69 each coordinate substrate. Residue cysteine 78 is the Proton donor of the active site. Substrate is bound by residues 79–80 (GN), asparagine 171, asparagine 205, and 223–224 (ER). Cysteine 232 functions as the Proton acceptor in the catalytic mechanism. Position 233 to 234 (233 to 234 (GT)) interacts with substrate.

This sequence belongs to the diaminopimelate epimerase family. As to quaternary structure, homodimer.

It is found in the cytoplasm. The enzyme catalyses (2S,6S)-2,6-diaminopimelate = meso-2,6-diaminopimelate. The protein operates within amino-acid biosynthesis; L-lysine biosynthesis via DAP pathway; DL-2,6-diaminopimelate from LL-2,6-diaminopimelate: step 1/1. In terms of biological role, catalyzes the stereoinversion of LL-2,6-diaminopimelate (L,L-DAP) to meso-diaminopimelate (meso-DAP), a precursor of L-lysine and an essential component of the bacterial peptidoglycan. The sequence is that of Diaminopimelate epimerase from Methylorubrum extorquens (strain CM4 / NCIMB 13688) (Methylobacterium extorquens).